The following is a 177-amino-acid chain: Putative pre-16S rRNA nuclease (177 aa).

The protein belongs to the YqgF nuclease family.

Its subcellular location is the cytoplasm. Functionally, could be a nuclease involved in processing of the 5'-end of pre-16S rRNA. The protein is Putative pre-16S rRNA nuclease of Psychrobacter arcticus (strain DSM 17307 / VKM B-2377 / 273-4).